Consider the following 204-residue polypeptide: Ribosomal RNA small subunit methyltransferase G (204 aa).

S-adenosyl-L-methionine contacts are provided by residues G76, L81, 127–128 (IE), and R140.

This sequence belongs to the methyltransferase superfamily. RNA methyltransferase RsmG family.

The protein resides in the cytoplasm. It carries out the reaction guanosine(527) in 16S rRNA + S-adenosyl-L-methionine = N(7)-methylguanosine(527) in 16S rRNA + S-adenosyl-L-homocysteine. In terms of biological role, specifically methylates the N7 position of guanine in position 527 of 16S rRNA. In Francisella philomiragia subsp. philomiragia (strain ATCC 25017 / CCUG 19701 / FSC 153 / O#319-036), this protein is Ribosomal RNA small subunit methyltransferase G.